The chain runs to 429 residues: Small ribosomal subunit protein bS1 (429 aa).

S1 motif domains are found at residues glycine 55–lysine 128, glycine 144–alanine 211, glycine 231–lysine 299, and glycine 316–lysine 385. The span at leucine 382–asparagine 399 shows a compositional bias: basic and acidic residues. Residues leucine 382 to lysine 412 are disordered.

The protein belongs to the bacterial ribosomal protein bS1 family.

Functionally, binds mRNA; thus facilitating recognition of the initiation point. It is needed to translate mRNA with a short Shine-Dalgarno (SD) purine-rich sequence. The protein is Small ribosomal subunit protein bS1 (rps1) of Leuconostoc lactis.